Reading from the N-terminus, the 314-residue chain is 4-hydroxy-3-methylbut-2-enyl diphosphate reductase (314 aa).

Cys-12 serves as a coordination point for [4Fe-4S] cluster. Residues His-41 and His-74 each coordinate (2E)-4-hydroxy-3-methylbut-2-enyl diphosphate. Dimethylallyl diphosphate contacts are provided by His-41 and His-74. Residues His-41 and His-74 each contribute to the isopentenyl diphosphate site. Cys-96 is a [4Fe-4S] cluster binding site. Position 124 (His-124) interacts with (2E)-4-hydroxy-3-methylbut-2-enyl diphosphate. His-124 contacts dimethylallyl diphosphate. His-124 is an isopentenyl diphosphate binding site. The Proton donor role is filled by Glu-126. Thr-167 serves as a coordination point for (2E)-4-hydroxy-3-methylbut-2-enyl diphosphate. Position 197 (Cys-197) interacts with [4Fe-4S] cluster. Positions 225, 226, 227, and 269 each coordinate (2E)-4-hydroxy-3-methylbut-2-enyl diphosphate. Residues Ser-225, Ser-226, Asn-227, and Ser-269 each coordinate dimethylallyl diphosphate. Residues Ser-225, Ser-226, Asn-227, and Ser-269 each contribute to the isopentenyl diphosphate site.

This sequence belongs to the IspH family. The cofactor is [4Fe-4S] cluster.

It catalyses the reaction isopentenyl diphosphate + 2 oxidized [2Fe-2S]-[ferredoxin] + H2O = (2E)-4-hydroxy-3-methylbut-2-enyl diphosphate + 2 reduced [2Fe-2S]-[ferredoxin] + 2 H(+). It carries out the reaction dimethylallyl diphosphate + 2 oxidized [2Fe-2S]-[ferredoxin] + H2O = (2E)-4-hydroxy-3-methylbut-2-enyl diphosphate + 2 reduced [2Fe-2S]-[ferredoxin] + 2 H(+). It functions in the pathway isoprenoid biosynthesis; dimethylallyl diphosphate biosynthesis; dimethylallyl diphosphate from (2E)-4-hydroxy-3-methylbutenyl diphosphate: step 1/1. Its pathway is isoprenoid biosynthesis; isopentenyl diphosphate biosynthesis via DXP pathway; isopentenyl diphosphate from 1-deoxy-D-xylulose 5-phosphate: step 6/6. Catalyzes the conversion of 1-hydroxy-2-methyl-2-(E)-butenyl 4-diphosphate (HMBPP) into a mixture of isopentenyl diphosphate (IPP) and dimethylallyl diphosphate (DMAPP). Acts in the terminal step of the DOXP/MEP pathway for isoprenoid precursor biosynthesis. This Haemophilus influenzae (strain ATCC 51907 / DSM 11121 / KW20 / Rd) protein is 4-hydroxy-3-methylbut-2-enyl diphosphate reductase.